We begin with the raw amino-acid sequence, 126 residues long: CD59 glycoprotein (126 aa).

Positions 1–22 (MRARRGFILLLLLAVLCSTGVS) are cleaved as a signal peptide. The 88-residue stretch at 23-110 (LRCYNCLDPV…NGAISLLGKT (88 aa)) folds into the UPAR/Ly6 domain. 5 cysteine pairs are disulfide-bonded: Cys25/Cys48, Cys28/Cys35, Cys41/Cys61, Cys67/Cys85, and Cys86/Cys91. N-linked (GlcNAc...) asparagine glycosylation occurs at Asn38. Asn101 carries the GPI-anchor amidated asparagine lipid modification. Positions 102-126 (GAISLLGKTALLVTSVLAAILKPCF) are cleaved as a propeptide — removed in mature form.

As to quaternary structure, interacts with T-cell surface antigen CD2. In terms of processing, N- and O-glycosylated.

Its subcellular location is the cell membrane. It localises to the secreted. Its function is as follows. Potent inhibitor of the complement membrane attack complex (MAC) action, which protects self-cells from damage during complement activation. Acts by binding to the beta-haipins of C8 (C8A and C8B) components of the assembling MAC, forming an intermolecular beta-sheet that prevents incorporation of the multiple copies of C9 required for complete formation of the osmolytic pore. This Rattus norvegicus (Rat) protein is CD59 glycoprotein.